A 73-amino-acid polypeptide reads, in one-letter code: Putative membrane protein insertion efficiency factor (73 aa).

The protein belongs to the UPF0161 family.

Its subcellular location is the cell inner membrane. Its function is as follows. Could be involved in insertion of integral membrane proteins into the membrane. The polypeptide is Putative membrane protein insertion efficiency factor (Treponema denticola (strain ATCC 35405 / DSM 14222 / CIP 103919 / JCM 8153 / KCTC 15104)).